Here is a 465-residue protein sequence, read N- to C-terminus: Glutamate--tRNA ligase 2 (465 aa).

The short motif at 8–18 (PSPTGLMHLGN) is the 'HIGH' region element. Positions 249-253 (PLSKR) match the 'KMSKS' region motif. ATP is bound at residue K252.

Belongs to the class-I aminoacyl-tRNA synthetase family. Glutamate--tRNA ligase type 1 subfamily. As to quaternary structure, monomer.

It is found in the cytoplasm. The enzyme catalyses tRNA(Glu) + L-glutamate + ATP = L-glutamyl-tRNA(Glu) + AMP + diphosphate. Its function is as follows. Catalyzes the attachment of glutamate to tRNA(Glu) in a two-step reaction: glutamate is first activated by ATP to form Glu-AMP and then transferred to the acceptor end of tRNA(Glu). The chain is Glutamate--tRNA ligase 2 from Coxiella burnetii (strain CbuK_Q154) (Coxiella burnetii (strain Q154)).